Consider the following 205-residue polypeptide: MSTVYTRPLARLIEQLQRLPGVGPKTAQRLALHLLKRPDSEVQALAQALLEAKQQVGLCSVCFHLSAEPVCEVCRAPSRDEGTLCVVADSRDVIALEKTREYHGKYHVLGGLISPMEGIGPEQLHIQPLIQRVSQTAVEEVIMAISPSIEGETTTLYIAQLLKPLTKLKGAKVTRIAFGLPMGGDLEYADEVTLARALEGRRELD.

The C4-type zinc finger occupies 59-74 (CSVCFHLSAEPVCEVC). In terms of domain architecture, Toprim spans 82–181 (GTLCVVADSR…KVTRIAFGLP (100 aa)).

It belongs to the RecR family.

In terms of biological role, may play a role in DNA repair. It seems to be involved in an RecBC-independent recombinational process of DNA repair. It may act with RecF and RecO. The polypeptide is Recombination protein RecR (Cyanothece sp. (strain PCC 7425 / ATCC 29141)).